The primary structure comprises 412 residues: NADH-quinone oxidoreductase subunit D (412 aa).

Belongs to the complex I 49 kDa subunit family. NDH-1 is composed of at least 14 different subunits, Nqo1 to Nqo14. The complex has a L-shaped structure, with the hydrophobic arm (subunits Nqo7, Nqo8, Nqo10 to Nqo14) embedded in the inner membrane and the hydrophilic peripheral arm (subunits Nqo1 to Nqo6, Nqo9) protruding into the bacterial cytoplasm. The hydrophilic domain contains all the redox centers. NADH-quinone oxidoreductase forms a supercomplex with ubiquinol-cytochrome c reductase complex (complex III or cytochrome b-c1 complex) and cytochrome c oxidase (complex IV), which stabilizes the NADH-quinone oxidoreductase complex.

The protein resides in the cell inner membrane. The enzyme catalyses a quinone + NADH + 5 H(+)(in) = a quinol + NAD(+) + 4 H(+)(out). In terms of biological role, NDH-1 shuttles electrons from NADH, via FMN and iron-sulfur (Fe-S) centers, to quinones in the respiratory chain. The immediate electron acceptor for the enzyme in this species is believed to be ubiquinone. Couples the redox reaction to proton translocation (for every two electrons transferred, four hydrogen ions are translocated across the cytoplasmic membrane), and thus conserves the redox energy in a proton gradient. The chain is NADH-quinone oxidoreductase subunit D (nuoD) from Paracoccus denitrificans (strain Pd 1222).